Consider the following 344-residue polypeptide: NDP-polyphosphate phosphotransferase 2 (344 aa).

The interval 1 to 60 (METAKPIAPQKDSKANGVDATDPVVKVASPQDPAGDAKVEDATAPVAEVEPRTPRNRRLP) is disordered.

This sequence belongs to the polyphosphate kinase 2 (PPK2) family. Class I subfamily. Mg(2+) serves as cofactor.

It catalyses the reaction [phosphate](n) + ATP = [phosphate](n+1) + ADP. The enzyme catalyses [phosphate](n) + CTP = [phosphate](n+1) + CDP. The catalysed reaction is [phosphate](n) + GTP = [phosphate](n+1) + GDP. It carries out the reaction [phosphate](n) + UTP = [phosphate](n+1) + UDP. Uses inorganic polyphosphate (polyP) as a donor to convert NDP to NTP. PolyP hydrolysis is slightly faster with ADP, but it can also use GDP, CDP and UDP. This chain is NDP-polyphosphate phosphotransferase 2, found in Ruegeria pomeroyi (strain ATCC 700808 / DSM 15171 / DSS-3) (Silicibacter pomeroyi).